We begin with the raw amino-acid sequence, 501 residues long: Aspartate--tRNA ligase, cytoplasmic (501 aa).

The residue at position 52 (Thr52) is a Phosphothreonine. Position 74 is an N6-acetyllysine (Lys74). Glu229 serves as a coordination point for L-aspartate. Ser249 carries the phosphoserine modification. The segment at Gln251–Lys254 is aspartate. An L-aspartate-binding site is contributed by Arg273. Residues Arg273–Glu275 and Arg281–Leu283 each bind ATP. Position 374 is an N6-acetyllysine (Lys374). The binding site for the 3'-end of tRNA stretch occupies residues Lys411 to Ser415. Glu424 is an ATP binding site. L-aspartate is bound by residues Ser427 and Arg431. Residue Gly472–Arg475 coordinates ATP. Position 500 is a phosphothreonine; by PKA (Thr500).

Belongs to the class-II aminoacyl-tRNA synthetase family. Type 2 subfamily. Homodimer. Part of a multisubunit complex that groups tRNA ligases for Arg (RARS1), Asp (DARS1), Gln (QARS1), Ile (IARS1), Leu (LARS1), Lys (KARS1), Met (MARS1) the bifunctional ligase for Glu and Pro (EPRS1) and the auxiliary subunits AIMP1/p43, AIMP2/p38 and EEF1E1/p18.

It localises to the cytoplasm. It carries out the reaction tRNA(Asp) + L-aspartate + ATP = L-aspartyl-tRNA(Asp) + AMP + diphosphate. In terms of biological role, catalyzes the specific attachment of an amino acid to its cognate tRNA in a 2 step reaction: the amino acid (AA) is first activated by ATP to form AA-AMP and then transferred to the acceptor end of the tRNA. In Pongo abelii (Sumatran orangutan), this protein is Aspartate--tRNA ligase, cytoplasmic (DARS1).